Consider the following 113-residue polypeptide: Ribosome-binding factor A (113 aa).

Belongs to the RbfA family. As to quaternary structure, monomer. Binds 30S ribosomal subunits, but not 50S ribosomal subunits or 70S ribosomes.

The protein resides in the cytoplasm. Its function is as follows. One of several proteins that assist in the late maturation steps of the functional core of the 30S ribosomal subunit. Associates with free 30S ribosomal subunits (but not with 30S subunits that are part of 70S ribosomes or polysomes). Required for efficient processing of 16S rRNA. May interact with the 5'-terminal helix region of 16S rRNA. This is Ribosome-binding factor A from Oceanobacillus iheyensis (strain DSM 14371 / CIP 107618 / JCM 11309 / KCTC 3954 / HTE831).